Consider the following 460-residue polypeptide: Muscarinic acetylcholine receptor M1 (460 aa).

The Extracellular portion of the chain corresponds to 1–22 (MNTSAPPAVSPNITVLAPGKGP). 2 N-linked (GlcNAc...) asparagine glycosylation sites follow: Asn2 and Asn12. A helical membrane pass occupies residues 23-48 (WQVAFIGITTGLLSLATVTGNLLVLI). Over 49–62 (SFKVNTELKTVNNY) the chain is Cytoplasmic. A helical transmembrane segment spans residues 63 to 84 (FLLSLACADLIIGTFSMNLYTT). The Extracellular segment spans residues 85–95 (YLLMGHWALGT). A helical membrane pass occupies residues 96–121 (LACDLWLALDYVASNASVMNLLLISF). Cysteines 98 and 178 form a disulfide. The Cytoplasmic segment spans residues 122–142 (DRYFSVTRPLSYRAKRTPRRA). The chain crosses the membrane as a helical span at residues 143–164 (ALMIGLAWLVSFVLWAPAILFW). Topologically, residues 165–185 (QYLVGERTVLAGQCYIQFLSQ) are extracellular. A helical transmembrane segment spans residues 186–209 (PIITFGTAMAAFYLPVTVMCTLYW). Over 210–366 (RIYRETESRA…LVKEKKAART (157 aa)) the chain is Cytoplasmic. 3 disordered regions span residues 225 to 256 (LQGSETPGKGGGSSSSSERSQPGAEGSPGTPP), 274 to 297 (WKEEEEEDEGSMESLTSSEGEEPG), and 310 to 351 (EAQA…QLAK). At Thr230 the chain carries Phosphothreonine. Over residues 238-247 (SSSSERSQPG) the composition is skewed to low complexity. Positions 328–343 (RPTKKGRDRAGKGQKP) are enriched in basic residues. A helical membrane pass occupies residues 367–390 (LSAILLAFILTWTPYNIMVLVSTF). The Extracellular portion of the chain corresponds to 391-397 (CKDCVPE). Residues 398–420 (TLWELGYWLCYVNSTINPMCYAL) traverse the membrane as a helical segment. Over 421–460 (CNKAFRDTFRLLLLCRWDKRRWRKIPKRPGSVHRTPSRQC) the chain is Cytoplasmic. Thr428 carries the post-translational modification Phosphothreonine. Ser451 bears the Phosphoserine mark. At Thr455 the chain carries Phosphothreonine. Residue Ser457 is modified to Phosphoserine.

The protein belongs to the G-protein coupled receptor 1 family. Muscarinic acetylcholine receptor subfamily. CHRM1 sub-subfamily. Interacts with GPRASP2. Interacts with TMEM147.

It localises to the cell membrane. It is found in the postsynaptic cell membrane. In terms of biological role, the muscarinic acetylcholine receptor mediates various cellular responses, including inhibition of adenylate cyclase, breakdown of phosphoinositides and modulation of potassium channels through the action of G proteins. Primary transducing effect is Pi turnover. This chain is Muscarinic acetylcholine receptor M1 (CHRM1), found in Pongo abelii (Sumatran orangutan).